A 262-amino-acid chain; its full sequence is T-cell surface glycoprotein YE1/48 (262 aa).

The Cytoplasmic portion of the chain corresponds to 1 to 44 (MSEQEVTYSMVRFHKSAGLQKQVRPEETKGPREAGYRRCSFHWK). The chain crosses the membrane as a helical; Signal-anchor for type II membrane protein span at residues 45-66 (FIVIALGIFCFLLLVAVSVLAI). Topologically, residues 67–262 (KIFQYDQQKN…CGKRLDKFPH (196 aa)) are extracellular. N-linked (GlcNAc...) asparagine glycans are attached at residues N86, N103, and N123. The short motif at 137–139 (RGD) is the Cell attachment site element. Residues 138-257 (GDKVYWFCYG…VFICICGKRL (120 aa)) form the C-type lectin domain. Intrachain disulfides connect C145-C150, C163-C251, C167-C253, and C232-C245.

As to quaternary structure, homodimer; disulfide-linked. High, in T-lymphoma lines, very low in normal lymphocytes.

Its subcellular location is the membrane. Its function is as follows. Receptor on natural killer (NK) cells for H-2d alleles. Inhibits the activity of NK cells thus preventing cell lysis. In Mus musculus (Mouse), this protein is T-cell surface glycoprotein YE1/48 (Klra1).